The chain runs to 378 residues: GTPase Obg (378 aa).

The region spanning 1 to 159 (MKFVDEATIE…RRLRLELKVL (159 aa)) is the Obg domain. The 177-residue stretch at 160–336 (ADVGLLGLPN…LIWALQDYLD (177 aa)) folds into the OBG-type G domain. GTP-binding positions include 166-173 (GLPNAGKS), 191-195 (FTTLH), 213-216 (DIPG), 288-291 (NKLD), and 317-319 (SGL). Residues Ser173 and Thr193 each coordinate Mg(2+). The segment at 345-378 (AQDQADGTYVAEDPRFDATRSDAAPPGAPRGGDE) is disordered.

It belongs to the TRAFAC class OBG-HflX-like GTPase superfamily. OBG GTPase family. Monomer. Mg(2+) serves as cofactor.

It is found in the cytoplasm. In terms of biological role, an essential GTPase which binds GTP, GDP and possibly (p)ppGpp with moderate affinity, with high nucleotide exchange rates and a fairly low GTP hydrolysis rate. Plays a role in control of the cell cycle, stress response, ribosome biogenesis and in those bacteria that undergo differentiation, in morphogenesis control. The protein is GTPase Obg of Bordetella petrii (strain ATCC BAA-461 / DSM 12804 / CCUG 43448).